A 443-amino-acid polypeptide reads, in one-letter code: KICSTOR complex protein ITFG2 (443 aa).

Residues 19–48 (FPHAICLGDVDNDALNELVVGDTSGKLSVY) form an FG-GAP 1; atypical repeat. Ser104 carries the phosphoserine modification. One copy of the FG-GAP 2; atypical repeat lies at 125 to 154 (NTKVMLISDIDGDGCYELVVGYTDRVVRAF). Ser219 bears the Phosphoserine mark.

As to quaternary structure, part of the KICSTOR complex composed of KPTN, ITFG2, KICS2 and SZT2. SZT2 probably serves as a link between the other three proteins in the KICSTOR complex and may mediate the direct interaction with the GATOR complex via GATOR1. The KICSTOR complex interacts directly with the GATOR1 complex and most probably indirectly with the GATOR2 complex in an amino acid-independent manner.

Its subcellular location is the lysosome membrane. In terms of biological role, as part of the KICSTOR complex functions in the amino acid-sensing branch of the TORC1 signaling pathway. Recruits, in an amino acid-independent manner, the GATOR1 complex to the lysosomal membranes and allows its interaction with GATOR2 and the RAG GTPases. Functions upstream of the RAG GTPases and is required to negatively regulate mTORC1 signaling in absence of amino acids. In absence of the KICSTOR complex mTORC1 is constitutively localized to the lysosome and activated. The KICSTOR complex is also probably involved in the regulation of mTORC1 by glucose. In Mus musculus (Mouse), this protein is KICSTOR complex protein ITFG2.